We begin with the raw amino-acid sequence, 628 residues long: tRNA uridine 5-carboxymethylaminomethyl modification enzyme MnmG (628 aa).

FAD contacts are provided by residues 14–19 (GAGHAG), Val-126, and Ser-181. An NAD(+)-binding site is contributed by 273-287 (GPRYCPSIEDKVVRF). An FAD-binding site is contributed by Gln-370.

Belongs to the MnmG family. As to quaternary structure, homodimer. Heterotetramer of two MnmE and two MnmG subunits. FAD serves as cofactor.

The protein resides in the cytoplasm. Functionally, NAD-binding protein involved in the addition of a carboxymethylaminomethyl (cmnm) group at the wobble position (U34) of certain tRNAs, forming tRNA-cmnm(5)s(2)U34. This chain is tRNA uridine 5-carboxymethylaminomethyl modification enzyme MnmG, found in Exiguobacterium sibiricum (strain DSM 17290 / CCUG 55495 / CIP 109462 / JCM 13490 / 255-15).